The sequence spans 517 residues: zeta-carotene-forming phytoene desaturase (517 aa).

Residue 11–44 participates in FAD binding; the sequence is VVVGAGVGGLAAAARLAHQGFDVQVFEKTQGPGG.

Belongs to the carotenoid/retinoid oxidoreductase family. FAD serves as cofactor.

The enzyme catalyses 15-cis-phytoene + 2 A = all-trans-zeta-carotene + 2 AH2. It functions in the pathway carotenoid biosynthesis; lycopene biosynthesis. Functionally, dehydrogenates carotenes in the cis conformation: has cis-to-trans isomerase activity and mediates dehydrogenation of cis-phytoene, producing zeta-carotene via the intermediary of phytofluene by the symmetrical introduction of 2 double bonds at the C-11 and C-11' positions of phytoene. In Myxococcus xanthus, this protein is zeta-carotene-forming phytoene desaturase (carA2).